We begin with the raw amino-acid sequence, 527 residues long: V-set and immunoglobulin domain-containing protein 10 (527 aa).

The N-terminal stretch at 1-13 (MWTRRWIQFLVLC) is a signal peptide. 4 Ig-like C2-type domains span residues 14–111 (LHLW…LKVS), 123–212 (PTRT…RQLL), 216–306 (PPIT…CQIQ), and 310–399 (PLLE…KEIN). At 23–409 (YLGVFRGDVN…VWLTVNKPHN (387 aa)) the chain is on the extracellular side. N-linked (GlcNAc...) asparagine glycans are attached at residues N32, N41, N52, N64, N74, N90, N129, N139, N191, N206, N226, N260, N276, N325, N346, and N375. C144 and C194 are disulfide-bonded. C238 and C288 are joined by a disulfide. A disulfide bridge connects residues C330 and C387. A helical membrane pass occupies residues 410-430 (IVGLVTALLLLFLLVVAIITG). The Cytoplasmic segment spans residues 431 to 527 (TVLYCDPQIY…TGEENQNEEI (97 aa)). The interval 501–527 (RPPESTSSDLFSEVSDDTGEENQNEEI) is disordered. Positions 514–527 (VSDDTGEENQNEEI) are enriched in acidic residues.

It is found in the membrane. The polypeptide is V-set and immunoglobulin domain-containing protein 10 (vsig10) (Xenopus laevis (African clawed frog)).